A 368-amino-acid polypeptide reads, in one-letter code: tRNA-specific 2-thiouridylase MnmA (368 aa).

Residues 11–18 (GMSGGVDS) and methionine 37 each bind ATP. Residues 97 to 99 (NPD) form an interaction with target base in tRNA region. Residue cysteine 102 is the Nucleophile of the active site. An intrachain disulfide couples cysteine 102 to cysteine 199. An ATP-binding site is contributed by glycine 127. Residues 149–151 (KDQ) are interaction with tRNA. Residue cysteine 199 is the Cysteine persulfide intermediate of the active site. The interval 311–312 (RY) is interaction with tRNA.

The protein belongs to the MnmA/TRMU family.

Its subcellular location is the cytoplasm. The enzyme catalyses S-sulfanyl-L-cysteinyl-[protein] + uridine(34) in tRNA + AH2 + ATP = 2-thiouridine(34) in tRNA + L-cysteinyl-[protein] + A + AMP + diphosphate + H(+). Functionally, catalyzes the 2-thiolation of uridine at the wobble position (U34) of tRNA, leading to the formation of s(2)U34. The chain is tRNA-specific 2-thiouridylase MnmA from Baumannia cicadellinicola subsp. Homalodisca coagulata.